Reading from the N-terminus, the 591-residue chain is V-type ATP synthase alpha chain (591 aa).

Residue 233–240 participates in ATP binding; sequence GPFGAGKT.

This sequence belongs to the ATPase alpha/beta chains family.

It catalyses the reaction ATP + H2O + 4 H(+)(in) = ADP + phosphate + 5 H(+)(out). In terms of biological role, produces ATP from ADP in the presence of a proton gradient across the membrane. The V-type alpha chain is a catalytic subunit. The chain is V-type ATP synthase alpha chain from Streptococcus pyogenes serotype M1.